Here is a 175-residue protein sequence, read N- to C-terminus: Gamma-crystallin A (175 aa).

Beta/gamma crystallin 'Greek key' domains are found at residues 2–40 (GKIT…RVDV) and 41–83 (HSWF…RLIP). The tract at residues 84-88 (QHTGT) is connecting peptide. 2 Beta/gamma crystallin 'Greek key' domains span residues 89–129 (FRMR…RVLE) and 130–172 (GSWV…RRVM).

The protein belongs to the beta/gamma-crystallin family.

Its function is as follows. Crystallins are the dominant structural components of the vertebrate eye lens. The chain is Gamma-crystallin A (CRYGA) from Bos taurus (Bovine).